A 142-amino-acid chain; its full sequence is MSSRFAGGNAYQRDTGRTQLFGPADGSNSLDDNVSSALGSTDKLDYSQSTLASLESQSEEQMGAMGQRIKALKSLSLKMGDEIRGSNQTIDQLGDTFHNTSVKLKRTFGNMMEMARRSGISIKTWLIIFFMVGVLFFWVWIT.

Residues 1–36 (MSSRFAGGNAYQRDTGRTQLFGPADGSNSLDDNVSS) are disordered. Residues 1–117 (MSSRFAGGNA…FGNMMEMARR (117 aa)) lie on the Cytoplasmic side of the membrane. Polar residues predominate over residues 26–36 (GSNSLDDNVSS). Positions 52 to 114 (ASLESQSEEQ…KRTFGNMMEM (63 aa)) constitute a t-SNARE coiled-coil homology domain. The chain crosses the membrane as a helical; Anchor for type IV membrane protein span at residues 118 to 141 (SGISIKTWLIIFFMVGVLFFWVWI). Residue threonine 142 is a topological domain, vesicular.

It belongs to the BET1 family. Component of a SNARE complex consisting of SED5, BOS1, BET1 and SEC22 or YKT6. Interacts with SEC24.

Its subcellular location is the golgi apparatus membrane. The protein localises to the endoplasmic reticulum membrane. Its function is as follows. SNARE required for targeting and fusion of ER-derived transport vesicles with the Golgi complex. The chain is Protein transport protein BET1 (BET1) from Saccharomyces cerevisiae (strain ATCC 204508 / S288c) (Baker's yeast).